A 275-amino-acid polypeptide reads, in one-letter code: Large ribosomal subunit protein uL2 (275 aa).

Residues 223 to 275 (VAMNPIDHPHGGGEGRTGEAREPVSPWGTPSKGYKTRRNKRTNNMIVQRRKRK) form a disordered region. The segment covering 229 to 244 (DHPHGGGEGRTGEARE) has biased composition (basic and acidic residues).

It belongs to the universal ribosomal protein uL2 family. In terms of assembly, part of the 50S ribosomal subunit. Forms a bridge to the 30S subunit in the 70S ribosome.

One of the primary rRNA binding proteins. Required for association of the 30S and 50S subunits to form the 70S ribosome, for tRNA binding and peptide bond formation. It has been suggested to have peptidyltransferase activity; this is somewhat controversial. Makes several contacts with the 16S rRNA in the 70S ribosome. The protein is Large ribosomal subunit protein uL2 of Bordetella avium (strain 197N).